Here is a 380-residue protein sequence, read N- to C-terminus: Chaperone protein DnaJ (380 aa).

Residues 5–72 enclose the J domain; the sequence is DYYETLGVAK…QKRAAYDQYG (68 aa). The CR-type zinc-finger motif lies at 140-218; it reads GKDTQIRIPS…CNGAGRIKSN (79 aa). 8 residues coordinate Zn(2+): cysteine 153, cysteine 156, cysteine 170, cysteine 173, cysteine 192, cysteine 195, cysteine 206, and cysteine 209. CXXCXGXG motif repeat units follow at residues 153-160, 170-177, 192-199, and 206-213; these read CSTCDGTG, CPTCSGSG, CPSCHGTG, and CTACNGAG. Positions 357 to 380 are disordered; that stretch reads LKKGGERHSPNAKSWTDRVKDLFK.

This sequence belongs to the DnaJ family. As to quaternary structure, homodimer. Zn(2+) serves as cofactor.

It localises to the cytoplasm. In terms of biological role, participates actively in the response to hyperosmotic and heat shock by preventing the aggregation of stress-denatured proteins and by disaggregating proteins, also in an autonomous, DnaK-independent fashion. Unfolded proteins bind initially to DnaJ; upon interaction with the DnaJ-bound protein, DnaK hydrolyzes its bound ATP, resulting in the formation of a stable complex. GrpE releases ADP from DnaK; ATP binding to DnaK triggers the release of the substrate protein, thus completing the reaction cycle. Several rounds of ATP-dependent interactions between DnaJ, DnaK and GrpE are required for fully efficient folding. Also involved, together with DnaK and GrpE, in the DNA replication of plasmids through activation of initiation proteins. In Methylibium petroleiphilum (strain ATCC BAA-1232 / LMG 22953 / PM1), this protein is Chaperone protein DnaJ.